The following is a 324-amino-acid chain: Probable WRKY transcription factor 53 (324 aa).

Residues 93-126 (NPGSVPESPASINGSPRSEEFADGGGSSESHHRQ) are disordered. The segment at residues 152 to 220 (GLEGPQDDVF…YRGTHTCSQA (69 aa)) is a DNA-binding region (WRKY).

Belongs to the WRKY group III family. Interacts with ESR/ESP and UPL5. Binds to WRKY30. Post-translationally, ubiquitinated by UPL5. Ubiquitination leads to its subsequent degradation, thus controlling the timing of leaf senescence.

The protein localises to the nucleus. Transcription factor. Interacts specifically with the W box (5'-(T)TGAC[CT]-3'), a frequently occurring elicitor-responsive cis-acting element. May regulate the early events of leaf senescence. Negatively regulates the expression of ESR/ESP. Together with WRKY46 and WRKY70, promotes resistance to P.syringae, probably by enhancing salicylic acid (SA)- dependent genes. Contributes to the suppression of jasmonic acid (MeJA)-induced expression of PDF1.2. This chain is Probable WRKY transcription factor 53, found in Arabidopsis thaliana (Mouse-ear cress).